Consider the following 308-residue polypeptide: Polyprenal reductase (308 aa).

Residues 1–2 lie on the Cytoplasmic side of the membrane; it reads MT. A helical membrane pass occupies residues 3–23; it reads LLALVWLLLDATFLITLLWHL. Residues 24-65 lie on the Lumenal side of the membrane; sequence LQGCKSGHSLLCSVFQDLIRYGKTKTGLQRPAWLQWFDIPKR. A helical transmembrane segment spans residues 66 to 86; sequence CFWHFYCVSLIWNGCLLWILL. The Cytoplasmic segment spans residues 87 to 120; sequence RLLLQSVPVPEWLQLVLHFLHAGSEPQILDRELS. Residues 121-141 form a helical membrane-spanning segment; it reads VILALALLWLHSLRRLLECLF. Residues 142-148 lie on the Lumenal side of the membrane; sequence VSVFSNG. Residues 149–169 traverse the membrane as a helical segment; it reads VIHLVQYCFGLGYYFLIGITV. The Cytoplasmic portion of the chain corresponds to 170–184; that stretch reads LTYCPLDRRTVSTDN. A helical transmembrane segment spans residues 185–205; sequence LLTQCHWYHILGLALYIWASL. The Lumenal portion of the chain corresponds to 206 to 255; the sequence is HQYRCHCILAGLRKSASGNVINLNHSVPCGDWFERVSCPHYFAELLIYVS. The chain crosses the membrane as a helical span at residues 256–276; that stretch reads IAVVFGLLNTIWWLVVLYVLL. Residues 277–308 are Cytoplasmic-facing; that stretch reads NQALAALLCHEFYHEKFDTYPIHRKAFIPFIF.

It belongs to the steroid 5-alpha reductase family. Polyprenal reductase subfamily.

It is found in the endoplasmic reticulum membrane. It carries out the reaction a di-trans,poly-cis-dolichal + NADP(+) = a di-trans,poly-cis-polyprenal + NADPH + H(+). It catalyses the reaction a 3-oxo-5alpha-steroid + NADP(+) = a 3-oxo-Delta(4)-steroid + NADPH + H(+). The catalysed reaction is androst-4-ene-3,17-dione + NADPH + H(+) = 5alpha-androstan-3,17-dione + NADP(+). The enzyme catalyses 17beta-hydroxy-5alpha-androstan-3-one + NADP(+) = testosterone + NADPH + H(+). The protein operates within protein modification; protein glycosylation. In terms of biological role, plays a key role in early steps of protein N-linked glycosylation by being involved in the conversion of polyprenol into dolichol. Acts as a polyprenal reductase that mediates the reduction of polyprenal into dolichal in a NADP-dependent mechanism. Dolichols are required for the synthesis of dolichol-linked monosaccharides and the oligosaccharide precursor used for N-glycosylation. Also able to convert testosterone (T) into 5-alpha-dihydrotestosterone (DHT). This chain is Polyprenal reductase (srd5a3), found in Xenopus tropicalis (Western clawed frog).